Consider the following 365-residue polypeptide: MQTLKVDLGERSYPIYIGEGLLDQPELLAPHIAGRQIAIVSNETVAPLYLERLSKALGAYSVLPVILPDGEAHKNWETLQLIFDGLLTARHDRRTTVVALGGGVIGDMAGFAAACYQRGVDFIQVPTTLLSQVDSSVGGKTGINHPLGKNMVGAFYQPNAVLIDTTTLNTLPERELSAGLAEVIKYGLICDKPFLGWLEDNIKALRALEPAALTEAIQRSCAAKAAVVGADERESGVRATLNLGHTFGHAIETHMGYGVWLHGEAVAAGTVMALEMSMRLGWIDQSERDRAIRLLQDAGLPVVPPQEMTPAHFMEHMAVDKKVIDGRLRLVLLRQMGEAVVTDDYPKEILQATLSADYRAIVAQL.

NAD(+)-binding positions include 69 to 74 (DGEAHK), 103 to 107 (GVIGD), 127 to 128 (TT), Lys140, Lys149, and 167 to 170 (TLNT). Residues Glu182, His245, and His262 each contribute to the Zn(2+) site.

This sequence belongs to the sugar phosphate cyclases superfamily. Dehydroquinate synthase family. Co(2+) serves as cofactor. Zn(2+) is required as a cofactor. It depends on NAD(+) as a cofactor.

The protein resides in the cytoplasm. The enzyme catalyses 7-phospho-2-dehydro-3-deoxy-D-arabino-heptonate = 3-dehydroquinate + phosphate. It functions in the pathway metabolic intermediate biosynthesis; chorismate biosynthesis; chorismate from D-erythrose 4-phosphate and phosphoenolpyruvate: step 2/7. Functionally, catalyzes the conversion of 3-deoxy-D-arabino-heptulosonate 7-phosphate (DAHP) to dehydroquinate (DHQ). The chain is 3-dehydroquinate synthase from Pseudomonas putida (strain W619).